The chain runs to 169 residues: S-ribosylhomocysteine lyase (169 aa).

Residues His54, His58, and Cys128 each contribute to the Fe cation site.

It belongs to the LuxS family. In terms of assembly, homodimer. Fe cation serves as cofactor.

It carries out the reaction S-(5-deoxy-D-ribos-5-yl)-L-homocysteine = (S)-4,5-dihydroxypentane-2,3-dione + L-homocysteine. Involved in the synthesis of autoinducer 2 (AI-2) which is secreted by bacteria and is used to communicate both the cell density and the metabolic potential of the environment. The regulation of gene expression in response to changes in cell density is called quorum sensing. Catalyzes the transformation of S-ribosylhomocysteine (RHC) to homocysteine (HC) and 4,5-dihydroxy-2,3-pentadione (DPD). The sequence is that of S-ribosylhomocysteine lyase from Shewanella baltica (strain OS223).